The sequence spans 394 residues: Probable purine permease 8 (394 aa).

The next 10 helical transmembrane spans lie at 45–65, 77–97, 113–133, 139–159, 172–192, 208–228, 247–267, 289–309, 315–335, and 344–364; these read WLRI…STIL, TWMG…FRFF, FSSF…VSAN, VGLL…QLAF, FTPF…LLVV, VIGI…LSLV, LVAY…FASG, TLAS…GLIF, FSNS…VIVF, and IFSI…HYLD. The interval 373–394 is disordered; the sequence is TSPVGDPHLLPAEEGHTNIHSV. Basic and acidic residues predominate over residues 383–394; it reads PAEEGHTNIHSV.

It belongs to the purine permeases (TC 2.A.7.14) family.

It is found in the membrane. The polypeptide is Probable purine permease 8 (PUP8) (Arabidopsis thaliana (Mouse-ear cress)).